A 158-amino-acid chain; its full sequence is Putative pre-16S rRNA nuclease (158 aa).

The disordered stretch occupies residues 138–158 (ELKPAQQTASRSGAGAGDGGS).

The protein belongs to the YqgF nuclease family.

Its subcellular location is the cytoplasm. Functionally, could be a nuclease involved in processing of the 5'-end of pre-16S rRNA. The chain is Putative pre-16S rRNA nuclease from Synechococcus sp. (strain CC9605).